The primary structure comprises 159 residues: Protein HydD (159 aa).

The protein belongs to the peptidase A31 family.

The chain is Protein HydD (hydD) from Wolinella succinogenes (strain ATCC 29543 / DSM 1740 / CCUG 13145 / JCM 31913 / LMG 7466 / NCTC 11488 / FDC 602W) (Vibrio succinogenes).